The sequence spans 423 residues: Glutamate-1-semialdehyde 2,1-aminomutase (423 aa).

N6-(pyridoxal phosphate)lysine is present on Lys-262.

The protein belongs to the class-III pyridoxal-phosphate-dependent aminotransferase family. HemL subfamily. Pyridoxal 5'-phosphate is required as a cofactor.

The protein resides in the cytoplasm. The enzyme catalyses (S)-4-amino-5-oxopentanoate = 5-aminolevulinate. It functions in the pathway porphyrin-containing compound metabolism; protoporphyrin-IX biosynthesis; 5-aminolevulinate from L-glutamyl-tRNA(Glu): step 2/2. This Methanosphaera stadtmanae (strain ATCC 43021 / DSM 3091 / JCM 11832 / MCB-3) protein is Glutamate-1-semialdehyde 2,1-aminomutase.